A 485-amino-acid chain; its full sequence is Adenosylhomocysteinase (485 aa).

Positions 64, 139, and 205 each coordinate substrate. Thr206–Thr208 contributes to the NAD(+) binding site. 2 residues coordinate substrate: Lys235 and Asp239. Residues Asn240, Gly269–Gly274, Glu292, Asn327, Ile348–His350, and Asn397 contribute to the NAD(+) site.

It belongs to the adenosylhomocysteinase family. NAD(+) is required as a cofactor.

It catalyses the reaction S-adenosyl-L-homocysteine + H2O = L-homocysteine + adenosine. It functions in the pathway amino-acid biosynthesis; L-homocysteine biosynthesis; L-homocysteine from S-adenosyl-L-homocysteine: step 1/1. Its function is as follows. Adenosylhomocysteine is a competitive inhibitor of S-adenosyl-L-methionine-dependent methyl transferase reactions; therefore adenosylhomocysteinase may play a key role in the control of methylations via regulation of the intracellular concentration of adenosylhomocysteine. The polypeptide is Adenosylhomocysteinase (SAHH) (Solanum lycopersicum (Tomato)).